We begin with the raw amino-acid sequence, 172 residues long: Adenine phosphoribosyltransferase (172 aa).

The protein belongs to the purine/pyrimidine phosphoribosyltransferase family. Homodimer.

It is found in the cytoplasm. It carries out the reaction AMP + diphosphate = 5-phospho-alpha-D-ribose 1-diphosphate + adenine. Its pathway is purine metabolism; AMP biosynthesis via salvage pathway; AMP from adenine: step 1/1. Catalyzes a salvage reaction resulting in the formation of AMP, that is energically less costly than de novo synthesis. The protein is Adenine phosphoribosyltransferase of Clostridium botulinum (strain ATCC 19397 / Type A).